We begin with the raw amino-acid sequence, 1044 residues long: MSDSAQSIKVLGELFEKLSVATAENREATATEIASFLNGNIIEHDVPEEFFKNLTKAVKDKKTAAAALETIAHIANENNLSPSVEPYIVDLVPEVCVKTGDKDKDVQSIASETLLAIVKAIDPVAIKVILPHLTKSLVTTNKWQEKVSVLAAISALVDAAKTQVALRMPELIPVLSEAMWDTKKEVKHAATATMTKATETVDNKDIERFIPELIQCIADPSQVSETVHLLGATTFVAEVTPATLSIMVPLLNRGLAERETSIKRKAAVIIDNMCKLVEDPQVVAPFLEKLLPGLKNNFATIADPEAREVTLRGLKTLRRVGNVSDDDTLPEVSHAGDIVTTRGVLDELTKDTPIAPRFAPVVNYIAAIAADLIDERIIDQQAWFTHVTPYMTVFFHEKQSKEIIDDFRKRAVDNIPVGPNFDDEEDEGEDLCNCEFSLAYGAKILLNKTQLRLKRARRYGLCGPNGAGKSTLMRAIANGQVDGFPTQDECRTVYVEHDIDGTQADTSVLDFVFQGDVGTREVITEKLREFGFSDEMIAMPIMSLSGGWKMKLALARAVLKNADILLLDEPTNHLDTVNVAWLVNYLNTCGITSIIVSHDSGFLDNVCQYIIHYEGLKLRKYKGNLSEFVKKCPTAKSYYELGASDLEFKFPEPGFLEGVKTKQKAIVKVSNMSFQYPGTSKPQIADINFQCSLSSRIAVIGPNGAGKSTLINVLTGELLPTTGEVYTHENCRIAYIKQHAFAHIENHLDKTPSEYIQWRFQTGEDRETMDRANRQINESDAESMNKIFKIDGTPRRIAGIHSRRKFKNTYEYECSFLLGENIGMKSERWVPMMSVDNAWLPRGELIESHSKMVAEVDMKEALASGQFRPLTRKEIEEHCAMLGLEAELVSHSRIRGLSGGQKVKLVLAACTWQRPHLIVLDEPTNYLDRDSLGALSKALKAFEGGVIIITHSAEFTKDLTEEVWAVKDGIMTPSGHNWVSGQGSGPRLEKKEDEGDKFDAMGNKIATGNKKKKLSSAELRKKKKERMKKKKELGDAYVSSDDEF.

Residues 5–42 (AQSIKVLGELFEKLSVATAENREATATEIASFLNGNII) form an HEAT 1 repeat. ADP is bound by residues isoleucine 42 and histidine 44. The stretch at 45 to 80 (DVPEEFFKNLTKAVKDKKTAAAALETIAHIANENNL) is one HEAT 2 repeat. Serine 83 contacts ADP. HEAT repeat units follow at residues 86–123 (PYIV…AIDP), 124–162 (VAIK…AAKT), 166–203 (LRMP…TVDN), 205–241 (DIER…EVTP), 242–279 (ATLS…LVED), and 285–323 (PFLE…VGNV). Residues threonine 392, histidine 396, and glutamate 397 each contribute to the ADP site. ABC transporter domains follow at residues 426 to 641 (DEGE…YYEL) and 667 to 993 (VKVS…KKED). The ADP site is built by asparagine 703, glutamate 922, asparagine 925, and histidine 951. A disordered region spans residues 975–1044 (GHNWVSGQGS…DAYVSSDDEF (70 aa)). Positions 987 to 999 (RLEKKEDEGDKFD) are enriched in basic and acidic residues. A compositionally biased stretch (basic residues) spans 1009 to 1031 (NKKKKLSSAELRKKKKERMKKKK).

The protein belongs to the ABC transporter superfamily. ABCF family. EF3 subfamily. Monomer.

The protein localises to the cytoplasm. It catalyses the reaction ATP + H2O = ADP + phosphate + H(+). It functions in the pathway protein biosynthesis; polypeptide chain elongation. Ribosome-dependent ATPase that functions in cytoplasmic translation elongation. Required for the ATP-dependent release of deacylated tRNA from the ribosomal E-site during protein biosynthesis. Stimulates the eEF1A-dependent binding of aminoacyl-tRNA to the ribosomal A-site, which has reduced affinity for tRNA as long as the E-site is occupied. Assists translation termination by stimulating the release of nascent protein from the ribosome by release factors. The sequence is that of Elongation factor 3 (TEF3) from Eremothecium gossypii (strain ATCC 10895 / CBS 109.51 / FGSC 9923 / NRRL Y-1056) (Yeast).